Reading from the N-terminus, the 479-residue chain is MNYLNENIDSLNKKLQDGEITAEDLAKETVKNIKETDKKINAWITVDDDAKPAENLDFAKNKLAGIPIAIKDNIITNGMKTTAASHILCNYMPVYDATVISKLKKAQATFVGKTNMDEFAMGSSTEHSYYGATRNPWDLEKVPGGSSGGSAAAVASGEVVAALGSDTGGSIRQPAAFNGIFGIKPTYGRVSRWGLIAFGSSLDQIGVMSKRVKDSAEVLNVIAGPDEHDATVSEKEVPDFTSFLGQDVKGLRVAVPKEYMDAVDGEMRDAIQKQIDVLKDAGAVINEVSLPHTKYVVPTYYIVASSEASSNLQRYDGIRYGYRAKDTKNLLDVYVKSRSEGFGDEVKRRIMLGSFALSAGAYDEFFKKAAQVRTLICRDFEKIFEENDVIVGPTTTEPAFGIGEEISDPIKMYNNDILTISANLAGIPAASVPAGLVDGMPAGLQIMAKRFDEGTVFKVADFIERNNKFYEKTPTGMED.

Residues K71 and S146 each act as charge relay system in the active site. The Acyl-ester intermediate role is filled by S170.

It belongs to the amidase family. GatA subfamily. In terms of assembly, heterotrimer of A, B and C subunits.

The enzyme catalyses L-glutamyl-tRNA(Gln) + L-glutamine + ATP + H2O = L-glutaminyl-tRNA(Gln) + L-glutamate + ADP + phosphate + H(+). Its function is as follows. Allows the formation of correctly charged Gln-tRNA(Gln) through the transamidation of misacylated Glu-tRNA(Gln) in organisms which lack glutaminyl-tRNA synthetase. The reaction takes place in the presence of glutamine and ATP through an activated gamma-phospho-Glu-tRNA(Gln). The sequence is that of Glutamyl-tRNA(Gln) amidotransferase subunit A from Lactobacillus gasseri (strain ATCC 33323 / DSM 20243 / BCRC 14619 / CIP 102991 / JCM 1131 / KCTC 3163 / NCIMB 11718 / NCTC 13722 / AM63).